The primary structure comprises 79 residues: CDC42 small effector protein 1-B (79 aa).

S-palmitoyl cysteine attachment occurs at residues C10 and C11. The 14-residue stretch at 30 to 43 (IGEPMNFVHLTHIG) folds into the CRIB domain. The segment at 41-79 (HIGSGDMGASDGLPKAGTVQEQMRSKCGRDRQWSNSRVL) is disordered. Residues 63-72 (MRSKCGRDRQ) show a composition bias toward basic and acidic residues.

It belongs to the CDC42SE/SPEC family.

It is found in the cytoplasm. The protein resides in the cytoskeleton. Its subcellular location is the cell membrane. Functionally, probably involved in the organization of the actin cytoskeleton by acting downstream of CDC42, inducing actin filament assembly. This Xenopus laevis (African clawed frog) protein is CDC42 small effector protein 1-B (cdc42se1-b).